Consider the following 179-residue polypeptide: Large ribosomal subunit protein uL5 (179 aa).

The protein belongs to the universal ribosomal protein uL5 family. In terms of assembly, part of the 50S ribosomal subunit; part of the 5S rRNA/L5/L18/L25 subcomplex. Contacts the 5S rRNA and the P site tRNA. Forms a bridge to the 30S subunit in the 70S ribosome.

Functionally, this is one of the proteins that bind and probably mediate the attachment of the 5S RNA into the large ribosomal subunit, where it forms part of the central protuberance. In the 70S ribosome it contacts protein S13 of the 30S subunit (bridge B1b), connecting the 2 subunits; this bridge is implicated in subunit movement. Contacts the P site tRNA; the 5S rRNA and some of its associated proteins might help stabilize positioning of ribosome-bound tRNAs. This Rhodospirillum rubrum (strain ATCC 11170 / ATH 1.1.1 / DSM 467 / LMG 4362 / NCIMB 8255 / S1) protein is Large ribosomal subunit protein uL5.